The following is a 150-amino-acid chain: SKP1-like protein 17 (150 aa).

An interaction with the F-box domain of F-box proteins region spans residues 92–150; that stretch reads LDAADYLIVIGLKNLIAQAIADYTADKTVNEIRELFNIENDYTPEEEEELRKKNEWAFN.

This sequence belongs to the SKP1 family. In terms of assembly, part of a SCF (SKP1-cullin-F-box) protein ligase complex. Interacts with CPR1/CPR30. Mainly detected in the siliques.

It localises to the nucleus. It functions in the pathway protein modification; protein ubiquitination. Involved in ubiquitination and subsequent proteasomal degradation of target proteins. Together with CUL1, RBX1 and a F-box protein, it forms a SCF E3 ubiquitin ligase complex. The functional specificity of this complex depends on the type of F-box protein. In the SCF complex, it serves as an adapter that links the F-box protein to CUL1. Probably implicated in incompatibility response after hybridization. The protein is SKP1-like protein 17 (ASK17) of Arabidopsis thaliana (Mouse-ear cress).